A 330-amino-acid polypeptide reads, in one-letter code: Ribosomal RNA small subunit methyltransferase H (330 aa).

S-adenosyl-L-methionine-binding positions include 50 to 52, aspartate 69, leucine 103, aspartate 117, and glutamine 124; that span reads GGH.

It belongs to the methyltransferase superfamily. RsmH family.

The protein resides in the cytoplasm. The catalysed reaction is cytidine(1402) in 16S rRNA + S-adenosyl-L-methionine = N(4)-methylcytidine(1402) in 16S rRNA + S-adenosyl-L-homocysteine + H(+). Specifically methylates the N4 position of cytidine in position 1402 (C1402) of 16S rRNA. The chain is Ribosomal RNA small subunit methyltransferase H from Saccharopolyspora erythraea (strain ATCC 11635 / DSM 40517 / JCM 4748 / NBRC 13426 / NCIMB 8594 / NRRL 2338).